The chain runs to 484 residues: UBX domain-containing protein 11 (484 aa).

The segment at 1 to 28 (MSSPLASLSKTRKVPLESESVNPGRRGI) is disordered. Positions 69–147 (HDSELMASMT…IGEMERFLSD (79 aa)) form a coiled coil. The SEP domain occupies 227 to 291 (LEPIPLKVYR…VSDLRNQIYP (65 aa)). The UBX domain occupies 389 to 466 (PMPLLSMLRI…GLVPNATLLL (78 aa)). Phosphoserine is present on residues S478 and S482.

In terms of assembly, interacts with GNA12, GNA13, RND1, RND2 and RND3.

It is found in the cytoplasm. The protein localises to the cytoskeleton. In terms of biological role, may be involved in the reorganization of actin cytoskeleton mediated by RND1, RND2 and RND3. Promotes RHOA activation mediated by GNA12 and GNA13. The polypeptide is UBX domain-containing protein 11 (Ubxn11) (Mus musculus (Mouse)).